We begin with the raw amino-acid sequence, 254 residues long: Pyruvate aldolase (254 aa).

Histidine 48 serves as the catalytic Proton acceptor. Residues glutamate 151 and aspartate 177 each coordinate a divalent metal cation.

The protein belongs to the HpcH/HpaI aldolase family. A divalent metal cation serves as cofactor.

The catalysed reaction is D-glyceraldehyde + pyruvate = 2-dehydro-3-deoxy-L-galactonate. Its function is as follows. Aldolase which can catalyze in vitro the aldolisation reaction between pyruvate (PA) and D-glyceraldehyde (D-GA) to form 2-dehydro-3-deoxy-L-galactonate. In Rhizobium etli (strain ATCC 51251 / DSM 11541 / JCM 21823 / NBRC 15573 / CFN 42), this protein is Pyruvate aldolase.